Reading from the N-terminus, the 162-residue chain is uncharacterized protein (162 aa).

This is an uncharacterized protein from Picosynechococcus sp. (strain ATCC 27264 / PCC 7002 / PR-6) (Agmenellum quadruplicatum).